The following is a 105-amino-acid chain: Large ribosomal subunit protein bL21 (105 aa).

The protein belongs to the bacterial ribosomal protein bL21 family. In terms of assembly, part of the 50S ribosomal subunit. Contacts protein L20.

In terms of biological role, this protein binds to 23S rRNA in the presence of protein L20. This is Large ribosomal subunit protein bL21 from Thermotoga maritima (strain ATCC 43589 / DSM 3109 / JCM 10099 / NBRC 100826 / MSB8).